The primary structure comprises 129 residues: Large ribosomal subunit protein bL20 (129 aa).

This sequence belongs to the bacterial ribosomal protein bL20 family.

In terms of biological role, binds directly to 23S ribosomal RNA and is necessary for the in vitro assembly process of the 50S ribosomal subunit. It is not involved in the protein synthesizing functions of that subunit. The protein is Large ribosomal subunit protein bL20 of Mycolicibacterium smegmatis (strain ATCC 700084 / mc(2)155) (Mycobacterium smegmatis).